The chain runs to 169 residues: Protein kinase-interacting protein PIKP1 (169 aa).

In terms of assembly, interacts with protein kinase PK1.

Its function is as follows. Plays a role in the stimulation of the viral kinase PK1 function in very late transcription and in expression of genes required for budded virus production. The polypeptide is Protein kinase-interacting protein PIKP1 (AC24) (Lepidoptera (butterflies and moths)).